We begin with the raw amino-acid sequence, 305 residues long: Glycine--tRNA ligase alpha subunit (305 aa).

The protein belongs to the class-II aminoacyl-tRNA synthetase family. Tetramer of two alpha and two beta subunits.

It localises to the cytoplasm. The catalysed reaction is tRNA(Gly) + glycine + ATP = glycyl-tRNA(Gly) + AMP + diphosphate. This chain is Glycine--tRNA ligase alpha subunit, found in Streptococcus thermophilus (strain CNRZ 1066).